The sequence spans 130 residues: Phosphoribosyl-AMP cyclohydrolase (130 aa).

Position 77 (Asp77) interacts with Mg(2+). Cys78 is a Zn(2+) binding site. Mg(2+) contacts are provided by Asp79 and Asp81. Residues Cys95 and Cys102 each coordinate Zn(2+).

It belongs to the PRA-CH family. In terms of assembly, homodimer. Mg(2+) serves as cofactor. The cofactor is Zn(2+).

Its subcellular location is the cytoplasm. It catalyses the reaction 1-(5-phospho-beta-D-ribosyl)-5'-AMP + H2O = 1-(5-phospho-beta-D-ribosyl)-5-[(5-phospho-beta-D-ribosylamino)methylideneamino]imidazole-4-carboxamide. Its pathway is amino-acid biosynthesis; L-histidine biosynthesis; L-histidine from 5-phospho-alpha-D-ribose 1-diphosphate: step 3/9. Functionally, catalyzes the hydrolysis of the adenine ring of phosphoribosyl-AMP. This is Phosphoribosyl-AMP cyclohydrolase from Pseudomonas syringae pv. tomato (strain ATCC BAA-871 / DC3000).